A 1256-amino-acid chain; its full sequence is Cohesin subunit SA-3 (1256 aa).

Low complexity predominate over residues 1-22; it reads MPTLWSPSTQHHGSSSGSMSSP. The disordered stretch occupies residues 1–110; it reads MPTLWSPSTQ…GGNDKNKSVP (110 aa). Over residues 72–83 the composition is skewed to basic residues; the sequence is RNVRKRAAKRPP. The SCD domain occupies 324–409; it reads FVHRYRDILP…NRFKDRMVSM (86 aa). 2 disordered regions span residues 1096–1169 and 1230–1256; these read RRLQ…GPEL and KLLH…MEDF. A compositionally biased stretch (polar residues) spans 1113-1125; it reads NSGPTTPTLTSTA. Residues 1126–1140 are compositionally biased toward basic residues; it reads VKRRQSPRTVGKRQK. Positions 1144-1166 are enriched in pro residues; that stretch reads GPGPGPGPGPGPGPGPGPGPGPG. Ser1234 carries the post-translational modification Phosphoserine.

It belongs to the SCC3 family. In terms of assembly, component of the meiosis-specific cohesin complex, which also contains the SMC1 (SMC1A or SMC1B) and SMC3 heterodimer. Such complex likely contains RAD21, or the meiosis-specific related protein REC8. Interacts with CCDC79/TERB1; recruiting cohesin to telomeres to develop structural rigidity. Phosphorylated. In terms of tissue distribution, testis specific.

The protein resides in the nucleus. It localises to the chromosome. Functionally, meiosis specific component of cohesin complex. The cohesin complex is required for the cohesion of sister chromatids after DNA replication. The cohesin complex apparently forms a large proteinaceous ring within which sister chromatids can be trapped. At anaphase, the complex is cleaved and dissociates from chromatin, allowing sister chromatids to segregate. The meiosis-specific cohesin complex probably replaces mitosis specific cohesin complex when it dissociates from chromatin during prophase I. This is Cohesin subunit SA-3 (Stag3) from Rattus norvegicus (Rat).